We begin with the raw amino-acid sequence, 440 residues long: Gap junction gamma-2 protein (440 aa).

The Cytoplasmic segment spans residues 1–21; it reads MTNMSWSFLTRLLEEIHNHST. A helical transmembrane segment spans residues 22 to 42; it reads FVGKVWLTVLVVFRIVLTAVG. Topologically, residues 43–78 are extracellular; that stretch reads GESIYSDEQSKFTCNTRQPGCDNVCYDAFAPLSHVR. A helical transmembrane segment spans residues 79 to 99; that stretch reads FWVFQIVVISTPSVMYLGYAV. Topologically, residues 100–223 are cytoplasmic; the sequence is HRLARASEQE…AQLVVRAAFE (124 aa). Residues 108-199 are disordered; the sequence is QERRRALRRR…TPGPAGQHDG (92 aa). Residues 112 to 124 show a composition bias toward basic residues; that stretch reads RALRRRPGTRRLP. Residues 136 to 149 show a composition bias toward low complexity; that stretch reads PDTTDLGEAEPILA. The segment covering 150–173 has biased composition (acidic residues); it reads LEEDEDEEPGAPEGPGEDTEEERA. Residues 224-244 form a helical membrane-spanning segment; that stretch reads VAFLVGQYLLYGFEVPPFFAC. Residues 245 to 264 lie on the Extracellular side of the membrane; sequence SRQPCPHVVDCFVSRPTEKT. The chain crosses the membrane as a helical span at residues 265–285; the sequence is VFLLVMYVVSCLCLLLNLCEM. Topologically, residues 286–440 are cytoplasmic; that stretch reads AHLGLGSAQD…SRDGKATVWI (155 aa). The segment at 369–440 is disordered; it reads DRDSPPCAGL…SRDGKATVWI (72 aa). Serine 372 is modified (phosphoserine). Residues 388-401 are compositionally biased toward low complexity; it reads VGGLASGTGSATSG.

The protein belongs to the connexin family. Gamma-type subfamily. In terms of assembly, a connexon is composed of a hexamer of connexins. Interacts with TJP1. As to expression, mainly expressed by oligodendrocytes in the central nervous system (at protein level).

It is found in the cell membrane. The protein resides in the cell junction. It localises to the gap junction. One gap junction consists of a cluster of closely packed pairs of transmembrane channels, the connexons, through which materials of low MW diffuse from one cell to a neighboring cell. May play a role in myelination in central and peripheral nervous systems. This Mus musculus (Mouse) protein is Gap junction gamma-2 protein (Gjc2).